The primary structure comprises 98 residues: Protein translation factor SUI1 homolog (98 aa).

This sequence belongs to the SUI1 family.

The polypeptide is Protein translation factor SUI1 homolog (Pyrococcus furiosus (strain ATCC 43587 / DSM 3638 / JCM 8422 / Vc1)).